The primary structure comprises 1640 residues: Phospholipase D C (1640 aa).

Positions 122 to 132 (SHRSNQSFNHS) are enriched in polar residues. Disordered regions lie at residues 122-247 (SHRS…KRLS), 264-283 (HNQNHQNHQNHQNHHHHTTT), 439-499 (EKQQ…YKYN), and 521-541 (DDEYYYGEYDDEDDSKPPSQE). The segment covering 133 to 193 (NSTTPLNTTN…YSSDNSYLHN (61 aa)) has biased composition (low complexity). The segment covering 197 to 231 (DIYEDEDDEDDEDDDDDEDEDDEGKEFEQDDEDES) has biased composition (acidic residues). Residues 232 to 247 (TISSMSLKNSQAKRLS) show a composition bias toward polar residues. Low complexity-rich tracts occupy residues 264 to 273 (HNQNHQNHQN) and 467 to 499 (TTTTATTNNNNNNNNNNNNNNNNNNNNNSYKYN). Acidic residues predominate over residues 521 to 534 (DDEYYYGEYDDEDD). The PLD phosphodiesterase 1 domain occupies 1009-1036 (LYWSHHQKVVVVDQRIAFIGGLDLCFGR). Catalysis depends on residues H1014, K1016, and D1021. Low complexity-rich tracts occupy residues 1149-1274 (INNN…NNLN) and 1282-1296 (HNNSLPHQLNNQQQQ). Positions 1149-1315 (INNNNNNANN…YQPPLPPQQR (167 aa)) are disordered. Over residues 1297–1306 (QHHHHHHHHY) the composition is skewed to basic residues. One can recognise a PLD phosphodiesterase 2 domain in the interval 1460–1487 (EQIYVHSKVLIVDDKIAIIGSANINDRS). Catalysis depends on residues H1465, K1467, and D1472.

The protein belongs to the phospholipase D family.

It catalyses the reaction a 1,2-diacyl-sn-glycero-3-phosphocholine + H2O = a 1,2-diacyl-sn-glycero-3-phosphate + choline + H(+). With respect to regulation, inhibited by butan-1-ol. Its function is as follows. Plays a role in cell growth. Hydrolyzes membrane phospholipids, such as PtdCho (phosphatidylcholine), producing the free headgroup and PtdOH (phosphatidic acid; signaling molecule on its own). Involved in the inhibition of actin-based motility and endocytosis. Its inhibition causes complete collapse of F-actin organization. This Dictyostelium discoideum (Social amoeba) protein is Phospholipase D C (pldC).